The primary structure comprises 198 residues: Imidazoleglycerol-phosphate dehydratase (198 aa).

This sequence belongs to the imidazoleglycerol-phosphate dehydratase family.

It localises to the cytoplasm. It carries out the reaction D-erythro-1-(imidazol-4-yl)glycerol 3-phosphate = 3-(imidazol-4-yl)-2-oxopropyl phosphate + H2O. It functions in the pathway amino-acid biosynthesis; L-histidine biosynthesis; L-histidine from 5-phospho-alpha-D-ribose 1-diphosphate: step 6/9. The protein is Imidazoleglycerol-phosphate dehydratase of Agrobacterium fabrum (strain C58 / ATCC 33970) (Agrobacterium tumefaciens (strain C58)).